The chain runs to 213 residues: Probable transaldolase (213 aa).

The active-site Schiff-base intermediate with substrate is the Lys83.

This sequence belongs to the transaldolase family. Type 3B subfamily.

The protein localises to the cytoplasm. It carries out the reaction D-sedoheptulose 7-phosphate + D-glyceraldehyde 3-phosphate = D-erythrose 4-phosphate + beta-D-fructose 6-phosphate. It participates in carbohydrate degradation; pentose phosphate pathway; D-glyceraldehyde 3-phosphate and beta-D-fructose 6-phosphate from D-ribose 5-phosphate and D-xylulose 5-phosphate (non-oxidative stage): step 2/3. Its function is as follows. Transaldolase is important for the balance of metabolites in the pentose-phosphate pathway. The protein is Probable transaldolase of Geobacillus kaustophilus (strain HTA426).